The primary structure comprises 124 residues: Large ribosomal subunit protein bL12 (124 aa).

It belongs to the bacterial ribosomal protein bL12 family. In terms of assembly, homodimer. Part of the ribosomal stalk of the 50S ribosomal subunit. Forms a multimeric L10(L12)X complex, where L10 forms an elongated spine to which 2 to 4 L12 dimers bind in a sequential fashion. Binds GTP-bound translation factors.

Functionally, forms part of the ribosomal stalk which helps the ribosome interact with GTP-bound translation factors. Is thus essential for accurate translation. This Burkholderia cenocepacia (strain ATCC BAA-245 / DSM 16553 / LMG 16656 / NCTC 13227 / J2315 / CF5610) (Burkholderia cepacia (strain J2315)) protein is Large ribosomal subunit protein bL12.